The chain runs to 581 residues: Putative carboxypeptidase YOL153C (581 aa).

Residues methionine 1–lysine 29 lie on the Cytoplasmic side of the membrane. A Glycyl lysine isopeptide (Lys-Gly) (interchain with G-Cter in ubiquitin) cross-link involves residue lysine 17. The chain crosses the membrane as a helical; Signal-anchor for type II membrane protein span at residues phenylalanine 30 to serine 46. Residues serine 47–aspartate 581 lie on the Extracellular side of the membrane. Asparagine 54 and asparagine 76 each carry an N-linked (GlcNAc...) asparagine glycan. Histidine 170 provides a ligand contact to Zn(2+). Aspartate 172 is a catalytic residue. Aspartate 207 contacts Zn(2+). Glutamate 241 functions as the Proton acceptor in the catalytic mechanism. Zn(2+) is bound by residues glutamate 242 and aspartate 270. Asparagine 335 and asparagine 428 each carry an N-linked (GlcNAc...) asparagine glycan. Histidine 550 is a binding site for Zn(2+).

The protein belongs to the peptidase M20A family. The cofactor is Zn(2+).

The protein localises to the membrane. The sequence is that of Putative carboxypeptidase YOL153C from Saccharomyces cerevisiae (strain ATCC 204508 / S288c) (Baker's yeast).